The following is a 388-amino-acid chain: Succinate--CoA ligase [ADP-forming] subunit beta (388 aa).

In terms of domain architecture, ATP-grasp spans 9–244 (KDLLSSYDIA…PSQENVRDVL (236 aa)). ATP-binding positions include Lys46, 53–55 (GRG), Val102, and Glu107. Residues Asn199 and Asp213 each contribute to the Mg(2+) site. Substrate is bound by residues Asn264 and 321–323 (GIM).

Belongs to the succinate/malate CoA ligase beta subunit family. As to quaternary structure, heterotetramer of two alpha and two beta subunits. Mg(2+) is required as a cofactor.

It catalyses the reaction succinate + ATP + CoA = succinyl-CoA + ADP + phosphate. It carries out the reaction GTP + succinate + CoA = succinyl-CoA + GDP + phosphate. It participates in carbohydrate metabolism; tricarboxylic acid cycle; succinate from succinyl-CoA (ligase route): step 1/1. Succinyl-CoA synthetase functions in the citric acid cycle (TCA), coupling the hydrolysis of succinyl-CoA to the synthesis of either ATP or GTP and thus represents the only step of substrate-level phosphorylation in the TCA. The beta subunit provides nucleotide specificity of the enzyme and binds the substrate succinate, while the binding sites for coenzyme A and phosphate are found in the alpha subunit. The chain is Succinate--CoA ligase [ADP-forming] subunit beta from Chlamydia felis (strain Fe/C-56) (Chlamydophila felis).